We begin with the raw amino-acid sequence, 400 residues long: S-adenosylmethionine synthase (400 aa).

Residue H17 coordinates ATP. D19 is a binding site for Mg(2+). K(+) is bound at residue E45. Residues E58 and Q101 each coordinate L-methionine. Positions 101–111 (QSADIAMGVDQ) are flexible loop. ATP is bound by residues 177–179 (DGK), 244–245 (RF), D253, 259–260 (RK), A276, and K280. D253 is an L-methionine binding site. An L-methionine-binding site is contributed by K284.

This sequence belongs to the AdoMet synthase family. In terms of assembly, homotetramer; dimer of dimers. The cofactor is Mg(2+). K(+) serves as cofactor.

The protein resides in the cytoplasm. It catalyses the reaction L-methionine + ATP + H2O = S-adenosyl-L-methionine + phosphate + diphosphate. Its pathway is amino-acid biosynthesis; S-adenosyl-L-methionine biosynthesis; S-adenosyl-L-methionine from L-methionine: step 1/1. Catalyzes the formation of S-adenosylmethionine (AdoMet) from methionine and ATP. The overall synthetic reaction is composed of two sequential steps, AdoMet formation and the subsequent tripolyphosphate hydrolysis which occurs prior to release of AdoMet from the enzyme. The protein is S-adenosylmethionine synthase of Bacillus velezensis (strain DSM 23117 / BGSC 10A6 / LMG 26770 / FZB42) (Bacillus amyloliquefaciens subsp. plantarum).